A 397-amino-acid polypeptide reads, in one-letter code: Bifunctional enzyme IspD/IspF (397 aa).

Positions 1–236 (MSIAAVILAA…QKKMQMFPDI (236 aa)) are 2-C-methyl-D-erythritol 4-phosphate cytidylyltransferase. The 2-C-methyl-D-erythritol 2,4-cyclodiphosphate synthase stretch occupies residues 237–397 (RTGNGYDVHS…NVLYPGEIPK (161 aa)). 2 residues coordinate a divalent metal cation: Asp-243 and His-245. Residues 243–245 (DVH) and 269–270 (HS) contribute to the 4-CDP-2-C-methyl-D-erythritol 2-phosphate site. His-277 contributes to the a divalent metal cation binding site. Residues 291–293 (DIG), 367–370 (TTNE), Phe-374, and Arg-377 each bind 4-CDP-2-C-methyl-D-erythritol 2-phosphate.

This sequence in the N-terminal section; belongs to the IspD/TarI cytidylyltransferase family. IspD subfamily. The protein in the C-terminal section; belongs to the IspF family. A divalent metal cation is required as a cofactor.

The catalysed reaction is 2-C-methyl-D-erythritol 4-phosphate + CTP + H(+) = 4-CDP-2-C-methyl-D-erythritol + diphosphate. It carries out the reaction 4-CDP-2-C-methyl-D-erythritol 2-phosphate = 2-C-methyl-D-erythritol 2,4-cyclic diphosphate + CMP. The protein operates within isoprenoid biosynthesis; isopentenyl diphosphate biosynthesis via DXP pathway; isopentenyl diphosphate from 1-deoxy-D-xylulose 5-phosphate: step 2/6. It participates in isoprenoid biosynthesis; isopentenyl diphosphate biosynthesis via DXP pathway; isopentenyl diphosphate from 1-deoxy-D-xylulose 5-phosphate: step 4/6. Functionally, bifunctional enzyme that catalyzes the formation of 4-diphosphocytidyl-2-C-methyl-D-erythritol from CTP and 2-C-methyl-D-erythritol 4-phosphate (MEP) (IspD), and catalyzes the conversion of 4-diphosphocytidyl-2-C-methyl-D-erythritol 2-phosphate (CDP-ME2P) to 2-C-methyl-D-erythritol 2,4-cyclodiphosphate (ME-CPP) with a corresponding release of cytidine 5-monophosphate (CMP) (IspF). This is Bifunctional enzyme IspD/IspF from Bartonella henselae (strain ATCC 49882 / DSM 28221 / CCUG 30454 / Houston 1) (Rochalimaea henselae).